The following is a 393-amino-acid chain: Pyruvate dehydrogenase E1 component subunit alpha-2, mitochondrial (393 aa).

A mitochondrion-targeting transit peptide spans 1–28; the sequence is MALSRLSSRSNTFLKPAITALPSSIRRH. Residues His-94, Tyr-120, Arg-121, Gly-169, Val-171, Asp-200, Gly-201, Ala-202, Asn-229, and Tyr-231 each coordinate pyruvate. Thiamine diphosphate is bound by residues Tyr-120, Arg-121, Gly-169, Val-171, Asp-200, Gly-201, Ala-202, and Asn-229. Residue Asp-200 participates in Mg(2+) binding. Mg(2+) contacts are provided by Asn-229 and Tyr-231. His-295 is a binding site for thiamine diphosphate.

Tetramer of 2 alpha and 2 beta subunits. The cofactor is thiamine diphosphate. Mg(2+) serves as cofactor.

It is found in the mitochondrion matrix. It catalyses the reaction N(6)-[(R)-lipoyl]-L-lysyl-[protein] + pyruvate + H(+) = N(6)-[(R)-S(8)-acetyldihydrolipoyl]-L-lysyl-[protein] + CO2. Its activity is regulated as follows. E1 activity is regulated by phosphorylation (inactivation) and dephosphorylation (activation) of the alpha subunit. Functionally, the pyruvate dehydrogenase complex catalyzes the overall conversion of pyruvate to acetyl-CoA and CO(2). It contains multiple copies of three enzymatic components: pyruvate dehydrogenase (E1), dihydrolipoamide acetyltransferase (E2) and lipoamide dehydrogenase (E3). The polypeptide is Pyruvate dehydrogenase E1 component subunit alpha-2, mitochondrial (IAR4) (Arabidopsis thaliana (Mouse-ear cress)).